Reading from the N-terminus, the 268-residue chain is MRRIAVVGAAGRMGKNLIEAVQQTGGAAGLTAAVDRPDSTLVGADAGELAGLGRIGVPLSGDLGKVCEEFDVLIDFTHPSVTLKNIEQCRKARRAMVIGTTGFSADEKLLLAEAAKDIPIVFAANFSVGVNLCLKLLDTAARVLGDEVDIEIIEAHHRHKVDAPSGTALRMGEVVAQALGRDLQEVAVYGREGQTGARARETIGFATVRAGDVVGDHTVLFAAEGERVEITHKASSRMTFARGAVRAALWLEGKENGLYDMQDVLGLR.

NAD(+) contacts are provided by residues 8-13 and Asp35; that span reads GAAGRM. Arg36 contributes to the NADP(+) binding site. NAD(+) contacts are provided by residues 99 to 101 and 123 to 126; these read GTT and AANF. His156 (proton donor/acceptor) is an active-site residue. His157 contacts (S)-2,3,4,5-tetrahydrodipicolinate. The active-site Proton donor is the Lys160. 166–167 lines the (S)-2,3,4,5-tetrahydrodipicolinate pocket; sequence GT.

Belongs to the DapB family.

The protein resides in the cytoplasm. It catalyses the reaction (S)-2,3,4,5-tetrahydrodipicolinate + NAD(+) + H2O = (2S,4S)-4-hydroxy-2,3,4,5-tetrahydrodipicolinate + NADH + H(+). The enzyme catalyses (S)-2,3,4,5-tetrahydrodipicolinate + NADP(+) + H2O = (2S,4S)-4-hydroxy-2,3,4,5-tetrahydrodipicolinate + NADPH + H(+). The protein operates within amino-acid biosynthesis; L-lysine biosynthesis via DAP pathway; (S)-tetrahydrodipicolinate from L-aspartate: step 4/4. Functionally, catalyzes the conversion of 4-hydroxy-tetrahydrodipicolinate (HTPA) to tetrahydrodipicolinate. This chain is 4-hydroxy-tetrahydrodipicolinate reductase, found in Pseudomonas aeruginosa (strain LESB58).